The sequence spans 366 residues: RNA 3'-terminal phosphate cyclase (366 aa).

ATP-binding residues include Gln-104, Pro-131, Tyr-294, Asp-297, Gln-298, and His-320. His-320 acts as the Tele-AMP-histidine intermediate in catalysis.

This sequence belongs to the RNA 3'-terminal cyclase family. Type 1 subfamily.

The protein resides in the nucleus. The protein localises to the nucleoplasm. The enzyme catalyses a 3'-end 3'-phospho-ribonucleotide-RNA + ATP = a 3'-end 2',3'-cyclophospho-ribonucleotide-RNA + AMP + diphosphate. Catalyzes the conversion of 3'-phosphate to a 2',3'-cyclic phosphodiester at the end of RNA. The mechanism of action of the enzyme occurs in 3 steps: (A) adenylation of the enzyme by ATP; (B) transfer of adenylate to an RNA-N3'P to produce RNA-N3'PP5'A; (C) and attack of the adjacent 2'-hydroxyl on the 3'-phosphorus in the diester linkage to produce the cyclic end product. Likely functions in some aspects of cellular RNA processing. Function plays an important role in regulating axon regeneration by inhibiting central nervous system (CNS) axon regeneration following optic nerve injury. The protein is RNA 3'-terminal phosphate cyclase (RTCA) of Macaca fascicularis (Crab-eating macaque).